Consider the following 404-residue polypeptide: Probable tRNA sulfurtransferase (404 aa).

In terms of domain architecture, THUMP spans 60 to 165 (RSVIEALKPV…DEAAYLSHED (106 aa)). Residues 183 to 184 (ML), 208 to 209 (HF), Arg265, Gly287, and Gln296 contribute to the ATP site.

This sequence belongs to the ThiI family.

The protein localises to the cytoplasm. It catalyses the reaction [ThiI sulfur-carrier protein]-S-sulfanyl-L-cysteine + a uridine in tRNA + 2 reduced [2Fe-2S]-[ferredoxin] + ATP + H(+) = [ThiI sulfur-carrier protein]-L-cysteine + a 4-thiouridine in tRNA + 2 oxidized [2Fe-2S]-[ferredoxin] + AMP + diphosphate. It carries out the reaction [ThiS sulfur-carrier protein]-C-terminal Gly-Gly-AMP + S-sulfanyl-L-cysteinyl-[cysteine desulfurase] + AH2 = [ThiS sulfur-carrier protein]-C-terminal-Gly-aminoethanethioate + L-cysteinyl-[cysteine desulfurase] + A + AMP + 2 H(+). Its pathway is cofactor biosynthesis; thiamine diphosphate biosynthesis. Its function is as follows. Catalyzes the ATP-dependent transfer of a sulfur to tRNA to produce 4-thiouridine in position 8 of tRNAs, which functions as a near-UV photosensor. Also catalyzes the transfer of sulfur to the sulfur carrier protein ThiS, forming ThiS-thiocarboxylate. This is a step in the synthesis of thiazole, in the thiamine biosynthesis pathway. The sulfur is donated as persulfide by IscS. This is Probable tRNA sulfurtransferase from Streptococcus equi subsp. equi (strain 4047).